A 603-amino-acid polypeptide reads, in one-letter code: MLEIESPTSLCFRTNTTCNALLRELQKIWVDIGESDAEKDRMLMELEKECLEIYRRKVDEAANSKAQLHQSLVSIEAEIASLLAALGVFNSHSPMKAKEGSKSLKEKLAAVRPMLEDLRLQKDERMKQFVDIKAQIEKMSGEISGYSDQLNKTMVGSLALDEQDLTLRKLNEYQTHLRSLQKEKSDRLNKVLDYVNEVHTLCGVLGVDFGQTVSEVHPSLHRTDHEQSTNISDDTLDGLHHMIHKLKTERSVRFQKLKDVAGSLFELWNLMDTSQEERTKFASVSYVVRSSESDITEPNILSSETIEQVSAEVDCFNKLKASRMKELVMKRRTELENLCRLAHIEADTSTSLEKSTALIDSGLVDPSELLTNIELHINKIKEEAHSRKEIIDRIDRWLSACEEENWLEEYNQDETRYSAGRGGHVNLKHAERARITVNKIPSMVDNLIKKTLLWEDETRKSFLYDGVRLVSILEDYKLTRKQQEEEKRRYRDQKKMQDLLIKRRESIYGSKPSPRRSNSVRKTNGYNGDASVPPTPRRNSAGATNNDIMTTPRSYSSHRQNGYFKEVRRLSTAPLNFVAIPKEDSVSTYTSVCGSEPDSPLYN.

3 coiled-coil regions span residues 48–79 (KECL…EAEI), 131–186 (DIKA…EKSD), and 468–502 (RLVS…LLIK). The disordered stretch occupies residues 501-559 (IKRRESIYGSKPSPRRSNSVRKTNGYNGDASVPPTPRRNSAGATNNDIMTTPRSYSSHR). S513 carries the phosphoserine modification. 2 stretches are compositionally biased toward polar residues: residues 515-526 (RRSNSVRKTNGY) and 537-559 (RRNS…SSHR). S599 bears the Phosphoserine mark.

This sequence belongs to the MAP65/ASE1 family. In terms of assembly, forms dimer. Binds to microtubules (MT).

The protein resides in the nucleus. It is found in the cytoplasm. Its subcellular location is the cytoskeleton. The protein localises to the spindle pole. The chain is 65-kDa microtubule-associated protein 7 (MAP65-7) from Arabidopsis thaliana (Mouse-ear cress).